A 163-amino-acid polypeptide reads, in one-letter code: Nucleotide-binding protein PMI0103 (163 aa).

The protein belongs to the YajQ family.

Nucleotide-binding protein. The protein is Nucleotide-binding protein PMI0103 of Proteus mirabilis (strain HI4320).